Consider the following 360-residue polypeptide: Arginase, non-hepatic 2 (360 aa).

Mn(2+) is bound by residues His-122, Asp-145, His-147, and Asp-149. Substrate is bound by residues His-147 to Asn-151, Ser-158 to Asn-160, and Asp-204. Residues Asp-253 and Asp-255 each coordinate Mn(2+). Substrate is bound by residues Thr-267 and Glu-298.

The protein belongs to the arginase family. As to quaternary structure, homotrimer. It depends on Mn(2+) as a cofactor. In terms of tissue distribution, expressed at differing tadpole stages in tail, intestine, hindlimb and trunk region. Strongest in tadpole tail.

The catalysed reaction is L-arginine + H2O = urea + L-ornithine. It participates in nitrogen metabolism; urea cycle; L-ornithine and urea from L-arginine: step 1/1. Its function is as follows. As well as its role in the urea cycle, may be involved in tissue remodeling. This chain is Arginase, non-hepatic 2 (arg2-b), found in Xenopus laevis (African clawed frog).